The sequence spans 126 residues: Small ribosomal subunit protein bS6 (126 aa).

This sequence belongs to the bacterial ribosomal protein bS6 family.

Binds together with bS18 to 16S ribosomal RNA. The polypeptide is Small ribosomal subunit protein bS6 (Bordetella bronchiseptica (strain ATCC BAA-588 / NCTC 13252 / RB50) (Alcaligenes bronchisepticus)).